A 443-amino-acid polypeptide reads, in one-letter code: ATP-dependent protease ATPase subunit HslU (443 aa).

ATP-binding positions include Ile18, 60–65, Asp256, Glu321, and Arg393; that span reads GVGKTE.

The protein belongs to the ClpX chaperone family. HslU subfamily. As to quaternary structure, a double ring-shaped homohexamer of HslV is capped on each side by a ring-shaped HslU homohexamer. The assembly of the HslU/HslV complex is dependent on binding of ATP.

Its subcellular location is the cytoplasm. ATPase subunit of a proteasome-like degradation complex; this subunit has chaperone activity. The binding of ATP and its subsequent hydrolysis by HslU are essential for unfolding of protein substrates subsequently hydrolyzed by HslV. HslU recognizes the N-terminal part of its protein substrates and unfolds these before they are guided to HslV for hydrolysis. In Pectobacterium carotovorum subsp. carotovorum (strain PC1), this protein is ATP-dependent protease ATPase subunit HslU.